A 505-amino-acid polypeptide reads, in one-letter code: Putative diacyglycerol O-acyltransferase MT0919 (505 aa).

The active-site Proton acceptor is the histidine 167.

The protein belongs to the long-chain O-acyltransferase family.

It catalyses the reaction an acyl-CoA + a 1,2-diacyl-sn-glycerol = a triacyl-sn-glycerol + CoA. It functions in the pathway glycerolipid metabolism; triacylglycerol biosynthesis. The protein is Putative diacyglycerol O-acyltransferase MT0919 of Mycobacterium tuberculosis (strain CDC 1551 / Oshkosh).